A 164-amino-acid polypeptide reads, in one-letter code: DNA-directed RNA polymerase 19 kDa subunit (164 aa).

A compositionally biased stretch (acidic residues) spans 1–35 (MADTDDIIDYESDDLTEYEDDDEEEEDGESLETSD). Residues 1-39 (MADTDDIIDYESDDLTEYEDDDEEEEDGESLETSDIDPK) are disordered.

This sequence belongs to the poxviridae DNA-directed RNA polymerase 19 kDa subunit family. As to quaternary structure, the DNA-dependent RNA polymerase used for intermediate and late genes expression consists of eight subunits Rpo30/OPG66, Rpo7/OPG90, Rpo22/OPG103, Rpo147/OPG105, Rpo18/OPG119, Rpo19/OPG131, Rpo132/OPG151 and Rpo35/OPG156. The same holoenzyme, with the addition of the transcription-specificity factor OPG109, is used for early gene expression.

The protein localises to the virion. It carries out the reaction RNA(n) + a ribonucleoside 5'-triphosphate = RNA(n+1) + diphosphate. Its function is as follows. Part of the DNA-dependent RNA polymerase which catalyzes the transcription of viral DNA into RNA using the four ribonucleoside triphosphates as substrates. Responsible for the transcription of early, intermediate and late genes. DNA-dependent RNA polymerase associates with the early transcription factor (ETF), itself composed of OPG118 and OPG133, thereby allowing the early genes transcription. Late transcription, and probably also intermediate transcription, require newly synthesized RNA polymerase. In Variola virus (isolate Human/India/Ind3/1967) (VARV), this protein is DNA-directed RNA polymerase 19 kDa subunit (OPG131).